A 363-amino-acid polypeptide reads, in one-letter code: Insulin gene enhancer protein ISL-3 (363 aa).

LIM zinc-binding domains lie at 27-80 and 89-143; these read CVGC…CKRD and CAKC…RADH. The homeobox DNA-binding region spans 191–250; sequence TTRVRTVLNEKQLHTLRTCYNANPRPDALMREQLVEMTGLSPRVIRVWFQNKRCKDKKRS. A disordered region spans residues 328-363; the sequence is FSESGSLGNSSGSDVTSLSSHLPDTPNSMVPSPVET. Low complexity predominate over residues 329 to 340; that stretch reads SESGSLGNSSGS. Polar residues predominate over residues 341 to 363; that stretch reads DVTSLSSHLPDTPNSMVPSPVET.

The protein localises to the nucleus. Functionally, binds to one of the cis-acting domain of the insulin gene enhancer. May be involved in subtype specialization of primary motoneurons. This chain is Insulin gene enhancer protein ISL-3 (isl3), found in Oncorhynchus tshawytscha (Chinook salmon).